Consider the following 1172-residue polypeptide: Carbamoyl phosphate synthase arginine-specific large chain, chloroplastic (1172 aa).

The segment covering 1 to 10 has biased composition (polar residues); it reads MATSLSSAPT. A disordered region spans residues 1–37; sequence MATSLSSAPTQLRPSPSPSHHRLLHRSSLLPFPRRHH. Residues 1–50 constitute a chloroplast transit peptide; that stretch reads MATSLSSAPTQLRPSPSPSHHRLLHRSSLLPFPRRHHHRRRRCGALSIAR. A carboxyphosphate synthetic domain region spans residues 72–473; that stretch reads GRLAGVRKIM…SFQKAVRSLE (402 aa). ATP-binding residues include R199, R240, G246, G247, K279, L281, E286, G312, V313, H314, Q356, and E370. An ATP-grasp 1 domain is found at 203–399; the sequence is KQAMDRIGLK…IAKMAAKLSV (197 aa). Mg(2+) contacts are provided by Q356, E370, and N372. Residues 474 to 623 are oligomerization domain; it reads TGFAGWGCAP…YSSYEYECES (150 aa). The interval 624–1019 is carbamoyl phosphate synthetic domain; sequence VPTNKKKVLI…GAFAKAQIAA (396 aa). The ATP-grasp 2 domain occupies 761–954; sequence NAILEELGIE…LAKYASLVMS (194 aa). R797, K836, L838, E843, G869, I870, H871, S872, Q912, and E925 together coordinate ATP. Positions 912, 925, and 927 each coordinate Mg(2+). The segment at 1020–1172 is allosteric domain; that stretch reads GQKLPLNGTV…QNLQAAQSAS (153 aa). Residues 1021–1162 form the MGS-like domain; that stretch reads QKLPLNGTVF…QDYFQTTDAS (142 aa).

It belongs to the CarB family. As to quaternary structure, heterodimer composed of 2 chains; the small (or glutamine) chain promotes the hydrolysis of glutamine to ammonia, which is used by the large (or ammonia) chain to synthesize carbamoyl phosphate. Mg(2+) serves as cofactor. Mn(2+) is required as a cofactor.

The protein resides in the plastid. It is found in the chloroplast. It catalyses the reaction hydrogencarbonate + L-glutamine + 2 ATP + H2O = carbamoyl phosphate + L-glutamate + 2 ADP + phosphate + 2 H(+). The catalysed reaction is hydrogencarbonate + NH4(+) + 2 ATP = carbamoyl phosphate + 2 ADP + phosphate + 2 H(+). Its pathway is amino-acid biosynthesis; L-arginine biosynthesis; carbamoyl phosphate from bicarbonate: step 1/1. In terms of biological role, large subunit of the arginine-specific carbamoyl phosphate synthase (CPSase). CPSase catalyzes the formation of carbamoyl phosphate from the ammonia moiety of glutamine, hydrogencarbonate, and phosphate donated by ATP, constituting the first step of 2 biosynthetic pathways, one leading to arginine and/or urea and the other to pyrimidine nucleotides. The large subunit (synthetase) binds the substrates ammonia (free or transferred from glutamine from the small subunit), hydrogencarbonate and ATP and carries out an ATP-coupled ligase reaction, activating hydrogencarbonate by forming carboxy phosphate which reacts with ammonia to form carbamoyl phosphate. The sequence is that of Carbamoyl phosphate synthase arginine-specific large chain, chloroplastic (CARB) from Oryza sativa subsp. japonica (Rice).